We begin with the raw amino-acid sequence, 171 residues long: MSIYLHIKFRLFLCIPDLPLRIHNQTFQEGLFCPFILHGFQNFVQRLALVKLDTVRGLFHFLCLLDHRLLHFLCRSCHWLVLVLLLLLLLLLLLLLLLVALVQRFLVLLVLADARRVILVTHAIFKRLGAIYACIVRVRTSIIMLFGILLGHSIITHLTVERNHPVITNIS.

This is an uncharacterized protein from Saccharomyces cerevisiae (strain ATCC 204508 / S288c) (Baker's yeast).